Here is a 250-residue protein sequence, read N- to C-terminus: Pyrroloquinoline-quinone synthase (250 aa).

Belongs to the PqqC family.

The enzyme catalyses 6-(2-amino-2-carboxyethyl)-7,8-dioxo-1,2,3,4,7,8-hexahydroquinoline-2,4-dicarboxylate + 3 O2 = pyrroloquinoline quinone + 2 H2O2 + 2 H2O + H(+). It participates in cofactor biosynthesis; pyrroloquinoline quinone biosynthesis. Ring cyclization and eight-electron oxidation of 3a-(2-amino-2-carboxyethyl)-4,5-dioxo-4,5,6,7,8,9-hexahydroquinoline-7,9-dicarboxylic-acid to PQQ. This Ectopseudomonas mendocina (strain ymp) (Pseudomonas mendocina) protein is Pyrroloquinoline-quinone synthase.